Here is a 491-residue protein sequence, read N- to C-terminus: Cytochrome P450 2K3 (491 aa).

C434 lines the heme pocket.

Belongs to the cytochrome P450 family. It depends on heme as a cofactor.

It is found in the endoplasmic reticulum membrane. Its subcellular location is the microsome membrane. The enzyme catalyses an organic molecule + reduced [NADPH--hemoprotein reductase] + O2 = an alcohol + oxidized [NADPH--hemoprotein reductase] + H2O + H(+). This chain is Cytochrome P450 2K3 (cyp2k3), found in Oncorhynchus mykiss (Rainbow trout).